A 233-amino-acid chain; its full sequence is ATP-dependent Clp protease proteolytic subunit 2 (233 aa).

Serine 116 (nucleophile) is an active-site residue. The active site involves histidine 141. Positions 214 to 233 (EGLKSIQPNGEAADDSEDDA) are disordered.

This sequence belongs to the peptidase S14 family. Fourteen ClpP subunits assemble into 2 heptameric rings which stack back to back to give a disk-like structure with a central cavity, resembling the structure of eukaryotic proteasomes.

It localises to the cytoplasm. The catalysed reaction is Hydrolysis of proteins to small peptides in the presence of ATP and magnesium. alpha-casein is the usual test substrate. In the absence of ATP, only oligopeptides shorter than five residues are hydrolyzed (such as succinyl-Leu-Tyr-|-NHMec, and Leu-Tyr-Leu-|-Tyr-Trp, in which cleavage of the -Tyr-|-Leu- and -Tyr-|-Trp bonds also occurs).. Its function is as follows. Cleaves peptides in various proteins in a process that requires ATP hydrolysis. Has a chymotrypsin-like activity. Plays a major role in the degradation of misfolded proteins. This is ATP-dependent Clp protease proteolytic subunit 2 from Salinibacter ruber (strain DSM 13855 / M31).